The chain runs to 402 residues: APO protein 3, mitochondrial (402 aa).

Residues 1 to 13 (MQRRKLVEISIFV) constitute a mitochondrion transit peptide. The segment at 37–59 (NDEDPLYADVPKPPKDKSERKPY) is disordered. Basic and acidic residues predominate over residues 48 to 58 (KPPKDKSERKP). APO domains follow at residues 127–213 (RCRL…DLEK) and 294–380 (TCGY…PVPD).

This sequence belongs to the APO family.

It localises to the mitochondrion. Functionally, may be involved in the stable assembly of several 4Fe-4S cluster-containing complexes of mitochondria. This is APO protein 3, mitochondrial (APO3) from Arabidopsis thaliana (Mouse-ear cress).